Reading from the N-terminus, the 172-residue chain is Ribosome maturation factor RimM (172 aa).

The 75-residue stretch at 96–170 (EENEFYFHEI…KITIEVMEGL (75 aa)) folds into the PRC barrel domain.

It belongs to the RimM family. In terms of assembly, binds ribosomal protein uS19.

The protein localises to the cytoplasm. In terms of biological role, an accessory protein needed during the final step in the assembly of 30S ribosomal subunit, possibly for assembly of the head region. Essential for efficient processing of 16S rRNA. May be needed both before and after RbfA during the maturation of 16S rRNA. It has affinity for free ribosomal 30S subunits but not for 70S ribosomes. The polypeptide is Ribosome maturation factor RimM (Listeria monocytogenes serotype 4b (strain CLIP80459)).